The following is a 245-amino-acid chain: Adenosine 5'-phosphosulfate reductase (245 aa).

Cysteine 124, cysteine 125, cysteine 205, and cysteine 208 together coordinate [4Fe-4S] cluster. Residue cysteine 231 is the Nucleophile; cysteine thiosulfonate intermediate of the active site.

Belongs to the PAPS reductase family. CysH subfamily. [4Fe-4S] cluster serves as cofactor.

It localises to the cytoplasm. It carries out the reaction [thioredoxin]-disulfide + sulfite + AMP + 2 H(+) = adenosine 5'-phosphosulfate + [thioredoxin]-dithiol. It participates in sulfur metabolism; hydrogen sulfide biosynthesis; sulfite from sulfate. Its function is as follows. Catalyzes the formation of sulfite from adenosine 5'-phosphosulfate (APS) using thioredoxin as an electron donor. This chain is Adenosine 5'-phosphosulfate reductase, found in Chelativorans sp. (strain BNC1).